Reading from the N-terminus, the 599-residue chain is Estrogen receptor (599 aa).

The segment at 1–188 is modulating (transactivation AF-1); mediates interaction with MACROD1; it reads MTMTLHTKAS…IMESAKETRY (188 aa). Residue Ser10 is glycosylated (O-linked (GlcNAc) serine). Residues 35–47 form a required for interaction with NCOA1 region; it reads MERALGEVYVDNS. The tract at residues 35 to 178 is interaction with DDX5; self-association; sequence MERALGEVYV…LSSSNEKGNM (144 aa). O-linked (GlcNAc) threonine glycosylation is present at Thr50. A phosphoserine; by CDK2 mark is found at Ser108 and Ser110. The residue at position 122 (Ser122) is a Phosphoserine. The disordered stretch occupies residues 147–175; that stretch reads DTGPPAFYRSNSDNRRQNGRERLSSSNEK. The span at 158–169 shows a compositional bias: basic and acidic residues; sequence SDNRRQNGRERL. Ser171 carries the post-translational modification Phosphoserine; by CK2. 2 NR C4-type zinc fingers span residues 189 to 209 and 225 to 249; these read CAVC…CEGC and CPAT…LRKC. Positions 189-254 form a DNA-binding region, nuclear receptor; sequence CAVCNDYASG…RLRKCYEVGM (66 aa). Positions 189–314 are mediates interaction with DNTTIP2; sequence CAVCNDYASG…TKKNSPALSL (126 aa). The tract at residues 255 to 314 is hinge; that stretch reads MKGGIRKDRRGGRMLKHKRQRDDLEGRNEMGASGDMRAANLWPSPLVIKHTKKNSPALSL. At Arg264 the chain carries Asymmetric dimethylarginine; by PRMT1. Residues 266 to 599 are interaction with AKAP13; the sequence is GRMLKHKRQR…PEAEGFPNTI (334 aa). The interval 268 to 599 is self-association; that stretch reads MLKHKRQRDD…PEAEGFPNTI (332 aa). The 237-residue stretch at 315-551 folds into the NR LBD domain; the sequence is TADQMVSALL…DLLLEMLDAH (237 aa). Residues 315–599 form a transactivation AF-2 region; sequence TADQMVSALL…PEAEGFPNTI (285 aa). The 17beta-estradiol site is built by Glu357 and Arg398. Cys451 carries the S-palmitoyl cysteine lipid modification. His528 lines the 17beta-estradiol pocket. Tyr541 bears the Phosphotyrosine; by Tyr-kinases mark. A disordered region spans residues 557–581; the sequence is ASRMGVPPEEPSQTQLATTSSTSAH. Residues 568–581 are compositionally biased toward low complexity; the sequence is SQTQLATTSSTSAH. Thr575 is a glycosylation site (O-linked (GlcNAc) threonine).

The protein belongs to the nuclear hormone receptor family. NR3 subfamily. As to quaternary structure, interacts with BCAS3. Binds DNA as a homodimer. Can form a heterodimer with ESR2. Interacts with coactivator NCOA5. Interacts with PELP1, the interaction is enhanced by 17-beta-estradiol; the interaction increases ESR1 transcriptional activity. Interacts with NCOA7; the interaction is ligand-inducible. Interacts with AKAP13, CUEDC2, HEXIM1, KDM5A, MAP1S, SMARD1, and UBE1C. Interacts with MUC1; the interaction is stimulated by 7 beta-estradiol (E2) and enhances ESR1-mediated transcription. Interacts with DNTTIP2, and UIMC1. Interacts with KMT2D/MLL2. Interacts with ATAD2; the interaction is enhanced by estradiol. Interacts with KIF18A and LDB1. Interacts with RLIM (via its C-terminus). Interacts with MACROD1. Interacts with SH2D4A and PLCG. Interacts with SH2D4A; the interaction blocks binding to PLCG and inhibits estrogen-induced cell proliferation. Interacts with DYNLL1. Interacts with CCDC62; the interaction requires estradiol and appears to enhance the transcription of target genes. Interacts with NR2C1; the interaction prevents homodimerization of ESR1 and suppresses its transcriptional activity and cell growth. Interacts with DNAAF4. Interacts with PRMT2. Interacts with RBFOX2. Interacts with EP300; the interaction is estrogen-dependent and enhanced by CITED1. Interacts with CITED1; the interaction is estrogen-dependent. Interacts with FAM120B, FOXL2, PHB2 and SLC30A9. Interacts with coactivators NCOA3 and NCOA6. Interacts with STK3/MST2 only in the presence of SAV1 and vice-versa. Binds to CSNK1D. Interacts with NCOA2; NCOA2 can interact with ESR1 AF-1 and AF-2 domains simultaneously and mediate their transcriptional synergy. Interacts with DDX5. Interacts with NCOA1; the interaction seems to require a self-association of N-terminal and C-terminal regions. Interacts with ZNF366, DDX17, NFKB1, RELA, SP1 and SP3. Interacts with NRIP1. Interacts with GPER1; the interaction occurs in an estrogen-dependent manner. Interacts with CLOCK and the interaction is stimulated by estrogen. Interacts with BCAS3. Interacts with TRIP4 (ufmylated); estrogen dependent. Interacts with LMTK3; the interaction phosphorylates ESR1 (in vitro) and protects it against proteasomal degradation. Interacts with CCAR2 (via N-terminus) in a ligand-independent manner. Interacts with ZFHX3. Interacts with SFR1 in a ligand-dependent and -independent manner. Interacts with DCAF13, LATS1 and DCAF1; regulates ESR1 ubiquitination and ubiquitin-mediated proteasomal degradation. Interacts (via DNA-binding domain) with POU4F2 isoform 2 (C-terminus); this interaction increases the estrogen receptor ESR1 transcriptional activity in a DNA- and ligand 17-beta-estradiol-independent manner. Interacts with ESRRB isoform 1. Interacts with UBE3A and WBP2. Interacts with GTF2B. Interacts with RBM39. In the absence of hormonal ligand, interacts with TACC1. Interacts with PI3KR1 or PI3KR2 and PTK2/FAK1. Interacts with SRC. Interacts with BAG1; the interaction is promoted in the absence of estradiol (17-beta-estradiol/E2). Interacts with and ubiquitinated by STUB1; the interaction is promoted in the absence of estradiol (17-beta-estradiol/E2). Interacts with NEDD8. In terms of processing, phosphorylated by cyclin A/CDK2 and CK1. Phosphorylation probably enhances transcriptional activity. Dephosphorylation at Ser-122 by PPP5C inhibits its transactivation activity. Phosphorylated by LMTK3 (in vitro). Post-translationally, ubiquitinated. Deubiquitinated by OTUB1. Palmitoylated at Cys-451 by ZDHHC7 and ZDHHC21. This modification is required for plasma membrane targeting and for rapid intracellular signaling via ERK and AKT kinases and cAMP generation, but not for signaling mediated by the nuclear hormone receptor. In terms of processing, ubiquitinated; regulated by LATS1 via DCAF1 it leads to ESR1 proteasomal degradation. Deubiquitinated by OTUB1. Ubiquitinated by STUB1/CHIP; in the CA1 hippocampal region following loss of endogenous circulating estradiol (17-beta-estradiol/E2). Ubiquitinated by UBR5, leading to its degradation: UBR5 specifically recognizes and binds ligand-bound ESR1 when it is not associated with coactivators (NCOAs). In presence of NCOAs, the UBR5-degron is not accessible, preventing its ubiquitination and degradation. Post-translationally, dimethylated by PRMT1 at Arg-264. The methylation may favor cytoplasmic localization. Demethylated by JMJD6 at Arg-264.

The protein resides in the nucleus. Its subcellular location is the cytoplasm. It localises to the golgi apparatus. The protein localises to the cell membrane. Nuclear hormone receptor. The steroid hormones and their receptors are involved in the regulation of eukaryotic gene expression and affect cellular proliferation and differentiation in target tissues. Ligand-dependent nuclear transactivation involves either direct homodimer binding to a palindromic estrogen response element (ERE) sequence or association with other DNA-binding transcription factors, such as AP-1/c-Jun, c-Fos, ATF-2, Sp1 and Sp3, to mediate ERE-independent signaling. Ligand binding induces a conformational change allowing subsequent or combinatorial association with multiprotein coactivator complexes through LXXLL motifs of their respective components. Mutual transrepression occurs between the estrogen receptor (ER) and NF-kappa-B in a cell-type specific manner. Decreases NF-kappa-B DNA-binding activity and inhibits NF-kappa-B-mediated transcription from the IL6 promoter and displace RELA/p65 and associated coregulators from the promoter. Recruited to the NF-kappa-B response element of the CCL2 and IL8 promoters and can displace CREBBP. Present with NF-kappa-B components RELA/p65 and NFKB1/p50 on ERE sequences. Can also act synergistically with NF-kappa-B to activate transcription involving respective recruitment adjacent response elements; the function involves CREBBP. Can activate the transcriptional activity of TFF1. Also mediates membrane-initiated estrogen signaling involving various kinase cascades. Essential for MTA1-mediated transcriptional regulation of BRCA1 and BCAS3. Maintains neuronal survival in response to ischemic reperfusion injury when in the presence of circulating estradiol (17-beta-estradiol/E2). In Mus musculus (Mouse), this protein is Estrogen receptor (Esr1).